Here is a 152-residue protein sequence, read N- to C-terminus: Ubiquitin-conjugating enzyme E2 2 (152 aa).

The UBC core domain maps to 4–150 (PARKRLMRDF…VREVVEQSWT (147 aa)). Cys88 serves as the catalytic Glycyl thioester intermediate.

It belongs to the ubiquitin-conjugating enzyme family. In terms of tissue distribution, expressed in all tissues examined. Lower levels found in leaves.

The enzyme catalyses S-ubiquitinyl-[E1 ubiquitin-activating enzyme]-L-cysteine + [E2 ubiquitin-conjugating enzyme]-L-cysteine = [E1 ubiquitin-activating enzyme]-L-cysteine + S-ubiquitinyl-[E2 ubiquitin-conjugating enzyme]-L-cysteine.. The protein operates within protein modification; protein ubiquitination. In terms of biological role, accepts the ubiquitin from the E1 complex and catalyzes its covalent attachment to other proteins. This chain is Ubiquitin-conjugating enzyme E2 2 (UBC2), found in Arabidopsis thaliana (Mouse-ear cress).